The sequence spans 168 residues: ATP synthase subunit b (168 aa).

Residues 9–29 traverse the membrane as a helical segment; the sequence is AIPFGTIAYTLVVFLILLVML.

The protein belongs to the ATPase B chain family. As to quaternary structure, F-type ATPases have 2 components, F(1) - the catalytic core - and F(0) - the membrane proton channel. F(1) has five subunits: alpha(3), beta(3), gamma(1), delta(1), epsilon(1). F(0) has three main subunits: a(1), b(2) and c(10-14). The alpha and beta chains form an alternating ring which encloses part of the gamma chain. F(1) is attached to F(0) by a central stalk formed by the gamma and epsilon chains, while a peripheral stalk is formed by the delta and b chains.

The protein resides in the cell membrane. F(1)F(0) ATP synthase produces ATP from ADP in the presence of a proton or sodium gradient. F-type ATPases consist of two structural domains, F(1) containing the extramembraneous catalytic core and F(0) containing the membrane proton channel, linked together by a central stalk and a peripheral stalk. During catalysis, ATP synthesis in the catalytic domain of F(1) is coupled via a rotary mechanism of the central stalk subunits to proton translocation. In terms of biological role, component of the F(0) channel, it forms part of the peripheral stalk, linking F(1) to F(0). In Bacillus cytotoxicus (strain DSM 22905 / CIP 110041 / 391-98 / NVH 391-98), this protein is ATP synthase subunit b.